The sequence spans 570 residues: Pleckstrin homology domain-containing family D member 1 (570 aa).

Residues 1–13 show a composition bias toward basic and acidic residues; sequence MTTKTTPKELKAK. The tract at residues 1 to 42 is disordered; it reads MTTKTTPKELKAKKESKKKGSAPEPPKNGPPRTSPPNTIEKK. Residues 23-34 are compositionally biased toward pro residues; that stretch reads PEPPKNGPPRTS. Residues 83–192 enclose the PH domain; the sequence is GVQNYGILMK…WLKALRSATK (110 aa). A coiled-coil region spans residues 202–448; that stretch reads ETMIRELENR…TGAQMTELQE (247 aa). The span at 542 to 551 shows a compositional bias: basic residues; the sequence is SKRGIRSSFR. The disordered stretch occupies residues 542–570; the sequence is SKRGIRSSFRKKTDSITTQPREKEPLMQL. Positions 561-570 are enriched in basic and acidic residues; sequence PREKEPLMQL.

Belongs to the PLEKHD1 family.

In Caenorhabditis elegans, this protein is Pleckstrin homology domain-containing family D member 1.